A 201-amino-acid chain; its full sequence is 2-phospho-L-lactate guanylyltransferase (201 aa).

It belongs to the CofC family. As to quaternary structure, homodimer.

It catalyses the reaction (2S)-2-phospholactate + GTP + H(+) = (2S)-lactyl-2-diphospho-5'-guanosine + diphosphate. The protein operates within cofactor biosynthesis; coenzyme F420 biosynthesis. Its function is as follows. Guanylyltransferase that catalyzes the activation of (2S)-2-phospholactate (2-PL) as (2S)-lactyl-2-diphospho-5'-guanosine, via the condensation of 2-PL with GTP. It is involved in the biosynthesis of coenzyme F420, a hydride carrier cofactor. This chain is 2-phospho-L-lactate guanylyltransferase, found in Natronomonas pharaonis (strain ATCC 35678 / DSM 2160 / CIP 103997 / JCM 8858 / NBRC 14720 / NCIMB 2260 / Gabara) (Halobacterium pharaonis).